We begin with the raw amino-acid sequence, 142 residues long: Hemoglobin subunit alpha (142 aa).

Residues 2 to 142 form the Globin domain; the sequence is VLSSADKNNV…VSTVLTSKYR (141 aa). Serine 4 bears the Phosphoserine mark. An N6-succinyllysine mark is found at lysine 8 and lysine 12. N6-acetyllysine; alternate is present on lysine 17. At lysine 17 the chain carries N6-succinyllysine; alternate. Tyrosine 25 bears the Phosphotyrosine mark. Serine 36 is subject to Phosphoserine. Lysine 41 is subject to N6-succinyllysine. At serine 50 the chain carries Phosphoserine. Histidine 59 contacts O2. Position 88 (histidine 88) interacts with heme b. Residue serine 103 is modified to Phosphoserine. At threonine 109 the chain carries Phosphothreonine. At serine 125 the chain carries Phosphoserine. A phosphothreonine mark is found at threonine 135 and threonine 138. Serine 139 carries the post-translational modification Phosphoserine.

This sequence belongs to the globin family. In terms of assembly, heterotetramer of two alpha chains and two beta chains. As to expression, red blood cells.

Involved in oxygen transport from the lung to the various peripheral tissues. Functionally, hemopressin acts as an antagonist peptide of the cannabinoid receptor CNR1. Hemopressin-binding efficiently blocks cannabinoid receptor CNR1 and subsequent signaling. This is Hemoglobin subunit alpha (HBA) from Panthera onca (Jaguar).